A 253-amino-acid polypeptide reads, in one-letter code: Claudin domain-containing protein 1 (253 aa).

Residues 5–25 form a helical membrane-spanning segment; that stretch reads FATAFVIACVLSLISTIYMAA. 2 N-linked (GlcNAc...) asparagine glycosylation sites follow: N42 and N72. The next 3 helical transmembrane spans lie at 141–161, 175–195, and 216–236; these read FLLPFVSLGLMCFGALIGLCA, ILHLLAGLCTLGSVSCYVAGI, and FCLACVSAPLQFMAAALFIWA.

It belongs to the PMP-22/EMP/MP20 family. In terms of tissue distribution, in the brain, highly expressed in endothelial cells of the cerebellum compared to other regions (at protein level).

It is found in the cell junction. It localises to the tight junction. Its subcellular location is the cell membrane. Plays a role in negatively regulating the permeability of cells to small molecules. In Mus musculus (Mouse), this protein is Claudin domain-containing protein 1 (Cldnd1).